The sequence spans 478 residues: tRNA-2-methylthio-N(6)-dimethylallyladenosine synthase (478 aa).

Residues 39–157 (KLVFTQTFGC…FPQLLTESIN (119 aa)) form the MTTase N-terminal domain. Cys-48, Cys-84, Cys-118, Cys-194, Cys-198, and Cys-201 together coordinate [4Fe-4S] cluster. In terms of domain architecture, Radical SAM core spans 180-410 (RKFELKAFVN…LEAVNRISAE (231 aa)). Residues 410-477 (EINDGYKDRI…TFSLNGILVN (68 aa)) form the TRAM domain.

The protein belongs to the methylthiotransferase family. MiaB subfamily. In terms of assembly, monomer. Requires [4Fe-4S] cluster as cofactor.

It is found in the cytoplasm. It catalyses the reaction N(6)-dimethylallyladenosine(37) in tRNA + (sulfur carrier)-SH + AH2 + 2 S-adenosyl-L-methionine = 2-methylsulfanyl-N(6)-dimethylallyladenosine(37) in tRNA + (sulfur carrier)-H + 5'-deoxyadenosine + L-methionine + A + S-adenosyl-L-homocysteine + 2 H(+). Catalyzes the methylthiolation of N6-(dimethylallyl)adenosine (i(6)A), leading to the formation of 2-methylthio-N6-(dimethylallyl)adenosine (ms(2)i(6)A) at position 37 in tRNAs that read codons beginning with uridine. The polypeptide is tRNA-2-methylthio-N(6)-dimethylallyladenosine synthase (Clostridioides difficile (strain 630) (Peptoclostridium difficile)).